Here is a 984-residue protein sequence, read N- to C-terminus: MORC family CW-type zinc finger protein 1 (984 aa).

A coiled-coil region spans residues 284 to 353 (AFKDEVKKAE…RELKTARTLS (70 aa)). A CW-type zinc finger spans residues 477-531 (AMGIPFIIQCDLCLKWRVLPSSTNYQEKEFFDIWICANNPNRLENSCHQVECLPS). The Zn(2+) site is built by Cys486, Cys489, Cys512, and Cys523. Coiled-coil stretches lie at residues 737–761 (DVSLKQEKKEIPLLNQEKQELCNDV) and 900–934 (EISLGQCENKRKISEDKLKNLRIKLALLLQKLQLG).

Its subcellular location is the nucleus. Required for spermatogenesis. Essential for de novo DNA methylation and silencing of transposable elements in the male embryonic germ cells. The sequence is that of MORC family CW-type zinc finger protein 1 from Homo sapiens (Human).